Consider the following 491-residue polypeptide: UDP-N-acetylmuramate--L-alanine ligase (491 aa).

An ATP-binding site is contributed by 126–132 (GTHGKTT).

It belongs to the MurCDEF family.

It is found in the cytoplasm. It carries out the reaction UDP-N-acetyl-alpha-D-muramate + L-alanine + ATP = UDP-N-acetyl-alpha-D-muramoyl-L-alanine + ADP + phosphate + H(+). The protein operates within cell wall biogenesis; peptidoglycan biosynthesis. Its function is as follows. Cell wall formation. This is UDP-N-acetylmuramate--L-alanine ligase from Escherichia coli (strain SMS-3-5 / SECEC).